The following is a 161-amino-acid chain: MIVRLHAIYQDITRDYLPPASLNHLMLLSKQTQHKLSFKSAPIPDLQPFFKNFTSKTPGSAKESPCSSTAKISSSISISSQCIFNVVILSFVFTSQNLNLPSHPALHNVSPESLNDRLMTQLECANSPRLACELWVGTDKEPILSPNSVSYRVMQPNEFES.

The helical transmembrane segment at 76 to 94 (ISISSQCIFNVVILSFVFT) threads the bilayer.

The protein resides in the membrane. This is an uncharacterized protein from Saccharomyces cerevisiae (strain ATCC 204508 / S288c) (Baker's yeast).